The chain runs to 462 residues: Probable Xaa-Pro aminopeptidase pepP (462 aa).

Mn(2+) contacts are provided by Asp-259, Asp-270, Glu-393, and Glu-433.

The protein belongs to the peptidase M24B family. It depends on Mn(2+) as a cofactor.

It catalyses the reaction Release of any N-terminal amino acid, including proline, that is linked to proline, even from a dipeptide or tripeptide.. Its function is as follows. Catalyzes the removal of a penultimate prolyl residue from the N-termini of peptides. This Metarhizium robertsii (strain ARSEF 23 / ATCC MYA-3075) (Metarhizium anisopliae (strain ARSEF 23)) protein is Probable Xaa-Pro aminopeptidase pepP (pepP).